Consider the following 264-residue polypeptide: Tryptophan synthase alpha chain (264 aa).

Catalysis depends on proton acceptor residues Glu49 and Asp60.

This sequence belongs to the TrpA family. In terms of assembly, tetramer of two alpha and two beta chains.

It catalyses the reaction (1S,2R)-1-C-(indol-3-yl)glycerol 3-phosphate + L-serine = D-glyceraldehyde 3-phosphate + L-tryptophan + H2O. It functions in the pathway amino-acid biosynthesis; L-tryptophan biosynthesis; L-tryptophan from chorismate: step 5/5. In terms of biological role, the alpha subunit is responsible for the aldol cleavage of indoleglycerol phosphate to indole and glyceraldehyde 3-phosphate. This chain is Tryptophan synthase alpha chain, found in Laribacter hongkongensis (strain HLHK9).